Consider the following 216-residue polypeptide: Somatotropin (216 aa).

The signal sequence occupies residues 1–26; sequence MAAGPRTSALLAFALLCLPWTREVGA. Residue histidine 45 coordinates Zn(2+). Cysteines 78 and 189 form a disulfide. Serine 131 carries the phosphoserine modification. Residue glutamate 198 participates in Zn(2+) binding. Cysteine 206 and cysteine 214 are oxidised to a cystine.

This sequence belongs to the somatotropin/prolactin family.

It localises to the secreted. Plays an important role in growth control. Its major role in stimulating body growth is to stimulate the liver and other tissues to secrete IGF1. It stimulates both the differentiation and proliferation of myoblasts. It also stimulates amino acid uptake and protein synthesis in muscle and other tissues. This is Somatotropin (GH1) from Sus scrofa (Pig).